The sequence spans 33 residues: Brevinin-2GRb (33 aa).

Expressed by the skin glands.

The protein localises to the secreted. In terms of biological role, antimicrobial peptide active against the Gram-positive bacterium S.aureus (MIC=25 uM) and against the Gram-negative bacteria E.coli (MIC=6 uM). Has no antifungal activity against C.albicans. Shows hemolytic activity against human erythrocytes only at high concentrations (LC(50)=180 uM). This is Brevinin-2GRb from Odorrana grahami (Yunnanfu frog).